The chain runs to 776 residues: Peregrinol diphosphate synthase CPS1, chloroplastic (776 aa).

A chloroplast-targeting transit peptide spans 1–17 (MASTPTLNLSITTPFVR). Lys-238 lines the substrate pocket. Residues Asp-371 and Asp-373 each contribute to the Mg(2+) site. The short motif at 371–374 (DIDD) is the DXDD motif element. Lys-457 lines the substrate pocket.

Belongs to the terpene synthase family. Requires Mg(2+) as cofactor. As to expression, present in both leaves and flowers, with higher levels in leaves.

It localises to the plastid. The protein resides in the chloroplast. The catalysed reaction is peregrinol diphosphate = (2E,6E,10E)-geranylgeranyl diphosphate + H2O. The protein operates within secondary metabolite biosynthesis; terpenoid biosynthesis. Involved in the biosynthesis of labdane-type diterpenoid including marrubiin and other labdane-related furanoid diterpenoids with potential applications as anti-diabetics, analgesics or vasorelaxants. Terpene synthase that produces peregrinol diphosphate from geranylgeranyl diphosphate (GGPP). The sequence is that of Peregrinol diphosphate synthase CPS1, chloroplastic from Marrubium vulgare (White horehound).